The chain runs to 252 residues: F-box protein At5g39250 (252 aa).

The region spanning 1–42 (MFSEEVLKNVFPLLEGEDLASCMGVCKQWRDIARDDFYWKCQ) is the F-box domain.

The protein is F-box protein At5g39250 of Arabidopsis thaliana (Mouse-ear cress).